The sequence spans 240 residues: MSDRLKERKRTPVSHKVIEKRRRDRINRCLNELGKTVPMALAKQSSGKLEKAEILEMTVQYLRALHSADFPRGREKELLAEFANYFHYGYHECMKNLVHYLTTVERMETKDTKYARILAFLQSKARLGAEPTFPPLSLPEPDFSYQLHAASPEFPGHSPGEATMFPQGATPGSFPWPPGAARSPALPYLSSATVPLPSPAQQHSPFLAPMQGLDRHYLNLIGHGHPNGLNLHTPQHPPVL.

In terms of domain architecture, bHLH spans 10-65; sequence RTPVSHKVIEKRRRDRINRCLNELGKTVPMALAKQSSGKLEKAEILEMTVQYLRAL. K48 is subject to N6-acetyllysine. The Orange domain occupies 86-121; that stretch reads FHYGYHECMKNLVHYLTTVERMETKDTKYARILAFL.

The protein belongs to the HEY family. As to quaternary structure, self-associates. Interacts with HES5 and HEY2. Expressed in heart and testis.

Its subcellular location is the nucleus. Transcriptional repressor which binds preferentially to the canonical E box sequence 5'-CACGCG-3'. Required for the development of GABAergic neurons. The sequence is that of Hairy and enhancer of split-related protein HELT (Helt) from Mus musculus (Mouse).